A 371-amino-acid chain; its full sequence is tRNA/tmRNA (uracil-C(5))-methyltransferase (371 aa).

S-adenosyl-L-methionine-binding residues include Gln194, Tyr223, Asn228, Glu244, and Asp304. The active-site Nucleophile is the Cys329. Glu363 serves as the catalytic Proton acceptor.

It belongs to the class I-like SAM-binding methyltransferase superfamily. RNA M5U methyltransferase family. TrmA subfamily.

The catalysed reaction is uridine(54) in tRNA + S-adenosyl-L-methionine = 5-methyluridine(54) in tRNA + S-adenosyl-L-homocysteine + H(+). The enzyme catalyses uridine(341) in tmRNA + S-adenosyl-L-methionine = 5-methyluridine(341) in tmRNA + S-adenosyl-L-homocysteine + H(+). Dual-specificity methyltransferase that catalyzes the formation of 5-methyluridine at position 54 (m5U54) in all tRNAs, and that of position 341 (m5U341) in tmRNA (transfer-mRNA). The polypeptide is tRNA/tmRNA (uracil-C(5))-methyltransferase (Sulfurovum sp. (strain NBC37-1)).